We begin with the raw amino-acid sequence, 342 residues long: ATPase asna-1 (342 aa).

Residue 26–33 coordinates ATP; it reads KGGVGKTT. Asp-55 is a catalytic residue. ATP-binding residues include Glu-243 and Asn-270. Zn(2+) is bound by residues Cys-285 and Cys-288.

It belongs to the arsA ATPase family. As to quaternary structure, homodimer.

It localises to the cytoplasm. It is found in the endoplasmic reticulum. In terms of biological role, ATPase required for the post-translational delivery of tail-anchored (TA) proteins to the endoplasmic reticulum. Recognizes and selectively binds the transmembrane domain of TA proteins in the cytosol. This complex then targets to the endoplasmic reticulum by membrane-bound receptors, where the tail-anchored protein is released for insertion. This process is regulated by ATP binding and hydrolysis. ATP binding drives the homodimer towards the closed dimer state, facilitating recognition of newly synthesized TA membrane proteins. ATP hydrolysis is required for insertion. Subsequently, the homodimer reverts towards the open dimer state, lowering its affinity for the membrane-bound receptor, and returning it to the cytosol to initiate a new round of targeting. May be involved in insulin signaling. In Caenorhabditis elegans, this protein is ATPase asna-1.